Reading from the N-terminus, the 92-residue chain is Small ribosomal subunit protein uS19 (92 aa).

This sequence belongs to the universal ribosomal protein uS19 family.

Functionally, protein S19 forms a complex with S13 that binds strongly to the 16S ribosomal RNA. This is Small ribosomal subunit protein uS19 from Corynebacterium kroppenstedtii (strain DSM 44385 / JCM 11950 / CIP 105744 / CCUG 35717).